Here is a 136-residue protein sequence, read N- to C-terminus: Small ribosomal subunit protein uS19 (136 aa).

This sequence belongs to the universal ribosomal protein uS19 family.

Functionally, protein S19 forms a complex with S13 that binds strongly to the 16S ribosomal RNA. The protein is Small ribosomal subunit protein uS19 of Methanosarcina mazei (strain ATCC BAA-159 / DSM 3647 / Goe1 / Go1 / JCM 11833 / OCM 88) (Methanosarcina frisia).